A 231-amino-acid chain; its full sequence is Sugar fermentation stimulation protein homolog (231 aa).

This sequence belongs to the SfsA family.

This is Sugar fermentation stimulation protein homolog from Geobacter sp. (strain M21).